Consider the following 274-residue polypeptide: NH(3)-dependent NAD(+) synthetase (274 aa).

Position 46–53 (46–53 (GISGGQDS)) interacts with ATP. D52 serves as a coordination point for Mg(2+). R140 serves as a coordination point for deamido-NAD(+). T160 serves as a coordination point for ATP. E165 serves as a coordination point for Mg(2+). 2 residues coordinate deamido-NAD(+): K173 and D180. Residues K189 and T211 each contribute to the ATP site. Residue 260-261 (HK) participates in deamido-NAD(+) binding.

It belongs to the NAD synthetase family. As to quaternary structure, homodimer.

It catalyses the reaction deamido-NAD(+) + NH4(+) + ATP = AMP + diphosphate + NAD(+) + H(+). It functions in the pathway cofactor biosynthesis; NAD(+) biosynthesis; NAD(+) from deamido-NAD(+) (ammonia route): step 1/1. Functionally, catalyzes the ATP-dependent amidation of deamido-NAD to form NAD. Uses ammonia as a nitrogen source. The sequence is that of NH(3)-dependent NAD(+) synthetase from Streptococcus pyogenes serotype M1.